Consider the following 222-residue polypeptide: 2-C-methyl-D-erythritol 2,4-cyclodiphosphate synthase, chloroplastic (222 aa).

The transit peptide at 1 to 43 (MATASSLFLASPVATAPTARARSTPSASPARPSLRLRRPSTLA) directs the protein to the chloroplast. Residues Asp73 and His75 each coordinate a divalent metal cation. Substrate is bound by residues 73–75 (DLH), 99–100 (HS), 103–111 (DVLLHCVVD), 121–123 (DIG), 126–130 (FPDSD), Asp130, 165–171 (LQKPKIS), and 196–200 (AKTHE). His107 lines the a divalent metal cation pocket.

Belongs to the IspF family. As to quaternary structure, homotrimer. Requires a divalent metal cation as cofactor. Expressed in roots, leaves, stems, leaf sheaths and young panicles.

Its subcellular location is the plastid. The protein resides in the chloroplast. The catalysed reaction is 4-CDP-2-C-methyl-D-erythritol 2-phosphate = 2-C-methyl-D-erythritol 2,4-cyclic diphosphate + CMP. It participates in isoprenoid biosynthesis; isopentenyl diphosphate biosynthesis via DXP pathway; isopentenyl diphosphate from 1-deoxy-D-xylulose 5-phosphate: step 4/6. Functionally, enzyme of the plastid non-mevalonate pathway for isoprenoid biosynthesis that converts 4-diphosphocytidyl-2C-methyl-D-erythritol 2-phosphate into 2C-methyl-D-erythritol 2,4-cyclodiphosphate and CMP. Is essential for chloroplast development. This is 2-C-methyl-D-erythritol 2,4-cyclodiphosphate synthase, chloroplastic from Oryza sativa subsp. japonica (Rice).